Here is a 140-residue protein sequence, read N- to C-terminus: MDLNPLLYLQAFNNDATTFNTQGHILEQQSDPTYFDTFASAMQAYIDTKQGGNDEEGTIIIMDDEDFNDSESLEDFLQMMNDEELNDRFSSDDEPEERVNPHEVNFMEINLHRDNQYESSKAPQATFDITEFIKTEEDDD.

This sequence belongs to the asfivirus D129L family.

This is an uncharacterized protein from African swine fever virus (isolate Pig/Kenya/KEN-50/1950) (ASFV).